A 139-amino-acid polypeptide reads, in one-letter code: Large ribosomal subunit protein uL13 (139 aa).

The protein belongs to the universal ribosomal protein uL13 family. As to quaternary structure, part of the 50S ribosomal subunit.

Functionally, this protein is one of the early assembly proteins of the 50S ribosomal subunit, although it is not seen to bind rRNA by itself. It is important during the early stages of 50S assembly. This chain is Large ribosomal subunit protein uL13, found in Nitratiruptor sp. (strain SB155-2).